The sequence spans 397 residues: Lysophospholipid transporter LplT (397 aa).

The Periplasmic segment spans residues 1 to 17; sequence MSESVHTNTSLWSKGMK. Residues 18–38 form a helical membrane-spanning segment; the sequence is AVIVAQFLSAFGDNALLFATL. At 39-52 the chain is on the cytoplasmic side; that stretch reads ALLKAQFYPEWSQP. Residues 53-73 form a helical membrane-spanning segment; the sequence is ILQMVFVGAYILFAPFVGQVA. The Periplasmic portion of the chain corresponds to 74 to 90; the sequence is DSFAKGRVMMFANGLKL. A helical transmembrane segment spans residues 91–111; sequence LGAASICFGINPFLGYTLVGV. Over 112-144 the chain is Cytoplasmic; sequence GAAAYSPAKYGILGELTTGSKLVKANGLMEAST. Residues 145 to 165 traverse the membrane as a helical segment; sequence IAAILLGSVAGGVLADWHVLV. A topological domain (periplasmic) is located at residue alanine 166. The chain crosses the membrane as a helical span at residues 167–187; sequence LAACALAYGGAVVANIYIPKL. Over 188–226 the chain is Cytoplasmic; the sequence is AAARPGQSWNLINMTRSFLNACTSLWRNGETRFSLVGTS. Residues 227–247 form a helical membrane-spanning segment; that stretch reads LFWGAGVTLRFLLVLWVPVAL. Residues 248 to 256 lie on the Periplasmic side of the membrane; it reads GITDNATPT. Residues 257–277 form a helical membrane-spanning segment; it reads YLNAMVAIGIVVGAGAAAKLV. The Cytoplasmic segment spans residues 278 to 280; the sequence is TLE. A helical membrane pass occupies residues 281–301; it reads TVSRCMPAGILIGVVVLIFSL. Over 302–304 the chain is Periplasmic; that stretch reads QHE. Residues 305-325 traverse the membrane as a helical segment; that stretch reads LLPAYALLMLIGVLGGFFVVP. Residues 326-343 lie on the Cytoplasmic side of the membrane; sequence LNALLQERGKKSVGAGNA. A helical transmembrane segment spans residues 344–364; that stretch reads IAVQNLGENSAMLLMLGIYSL. At 365–366 the chain is on the periplasmic side; it reads AV. A helical transmembrane segment spans residues 367–387; that stretch reads MVGIPVVPIGIGFGALFALAI. At 388–397 the chain is on the cytoplasmic side; the sequence is TALWIWQRRH.

This sequence belongs to the major facilitator superfamily. LplT (TC 2.A.1.42) family.

Its subcellular location is the cell inner membrane. Functionally, catalyzes the facilitated diffusion of 2-acyl-glycero-3-phosphoethanolamine (2-acyl-GPE) into the cell. In Escherichia coli (strain SMS-3-5 / SECEC), this protein is Lysophospholipid transporter LplT.